We begin with the raw amino-acid sequence, 295 residues long: MMQTPYTTSTQGQYCHSCGMFHHHSQSCCYNNNNNSNAGSYSMVFSMQNGGVFEQNGEDYHHSSSLVDCTLSLGTPSTRLCEEDEKRRRSTSSGASSCISNFWDLIHTKNNNSKTAPYNNVPSFSANKPSRGCSGGGGGGGGGGGGDSLLARRCANCDTTSTPLWRNGPRGPKSLCNACGIRFKKEERRTTAATGNTVVGAAPVQTDQYGHHNSGYNNYHAATNNNNNNGTPWAHHHSTQRVPCNYPANEIRFMDDYGSGVANNVESDGAHGGVPFLSWRLNVADRASLVHDFTR.

A GATA-type zinc finger spans residues 148 to 202; that stretch reads SLLARRCANCDTTSTPLWRNGPRGPKSLCNACGIRFKKEERRTTAATGNTVVGAA.

It belongs to the type IV zinc-finger family. Class B subfamily. Homodimer. Forms heterodimers with GATA19, GATA22 and GATA21. Interacts with JAG. Binds to AGO10/PNH. In terms of tissue distribution, expressed in vegetative and inflorescence shoot apical meristems (SAMs), axillary (SAMs), floral meristems, developing ovules and stamens, vascular tissues, and in the embryo.

The protein resides in the nucleus. Functionally, transcriptional factor that specifically binds 5'-GATA-3' or 5'-GAT-3' motifs within gene promoters (including its own promoter and GATA21 promoter), thus regulating the expression of genes mostly involved in hormone responses and floral organ specification (including genes regulating hormones responses). Regulates both flower and shoot apical meristem (SAM) development, especially for establishing organ boundaries in shoots and flowers, probably by controlling the number and position of WUS-expressing cells. Coregulates, with AGO10/PNH, the shoot apical meristem (SAM) organization. Regulates floral organ development via the promotion of JAG and NPR5/BOP2 expression. Modulates cytokinin homeostasis in organ boundaries by regulating CKX3 expression. Involved in cell proliferation and differentiation. Required to position the inductive proembryo boundary via the regulation of gene expression and for early embryonic development. Together with GIF1/AN3, mediates cotyledon identity by preventing ectopic root formation through the repression of PLT1 expression. This is GATA transcription factor 18 from Arabidopsis thaliana (Mouse-ear cress).